Consider the following 275-residue polypeptide: 4-diphosphocytidyl-2-C-methyl-D-erythritol kinase (275 aa).

Lysine 15 is an active-site residue. 97-107 (PMGSGLGGGSS) contacts ATP. Aspartate 137 is a catalytic residue.

Belongs to the GHMP kinase family. IspE subfamily.

It catalyses the reaction 4-CDP-2-C-methyl-D-erythritol + ATP = 4-CDP-2-C-methyl-D-erythritol 2-phosphate + ADP + H(+). It functions in the pathway isoprenoid biosynthesis; isopentenyl diphosphate biosynthesis via DXP pathway; isopentenyl diphosphate from 1-deoxy-D-xylulose 5-phosphate: step 3/6. Its function is as follows. Catalyzes the phosphorylation of the position 2 hydroxy group of 4-diphosphocytidyl-2C-methyl-D-erythritol. This is 4-diphosphocytidyl-2-C-methyl-D-erythritol kinase from Pseudothermotoga lettingae (strain ATCC BAA-301 / DSM 14385 / NBRC 107922 / TMO) (Thermotoga lettingae).